The sequence spans 434 residues: Ribosomal protein uS12 methylthiotransferase RimO (434 aa).

Residues M1–Q107 form the MTTase N-terminal domain. C5, C41, C70, C145, C149, and C152 together coordinate [4Fe-4S] cluster. Residues T131 to L360 enclose the Radical SAM core domain. Residues Q363–V434 enclose the TRAM domain.

The protein belongs to the methylthiotransferase family. RimO subfamily. [4Fe-4S] cluster is required as a cofactor.

The protein resides in the cytoplasm. The catalysed reaction is L-aspartate(89)-[ribosomal protein uS12]-hydrogen + (sulfur carrier)-SH + AH2 + 2 S-adenosyl-L-methionine = 3-methylsulfanyl-L-aspartate(89)-[ribosomal protein uS12]-hydrogen + (sulfur carrier)-H + 5'-deoxyadenosine + L-methionine + A + S-adenosyl-L-homocysteine + 2 H(+). Functionally, catalyzes the methylthiolation of an aspartic acid residue of ribosomal protein uS12. This is Ribosomal protein uS12 methylthiotransferase RimO from Prochlorococcus marinus (strain SARG / CCMP1375 / SS120).